The primary structure comprises 101 residues: Replication restart protein PriB (101 aa).

One can recognise an SSB domain in the interval 1–101 (MTTNNLVLAG…LHAENVELKT (101 aa)).

The protein belongs to the PriB family. Homodimer. Interacts with PriA and DnaT. Component of the replication restart primosome. Primosome assembly occurs via a 'hand-off' mechanism. PriA binds to replication forks, subsequently PriB then DnaT bind; DnaT then displaces ssDNA to generate the helicase loading substrate.

Its function is as follows. Involved in the restart of stalled replication forks, which reloads the replicative helicase on sites other than the origin of replication; the PriA-PriB pathway is the major replication restart pathway. During primosome assembly it facilitates complex formation between PriA and DnaT on DNA; stabilizes PriA on DNA. Stimulates the DNA unwinding activity of PriA helicase. The sequence is that of Replication restart protein PriB from Shewanella pealeana (strain ATCC 700345 / ANG-SQ1).